The following is a 413-amino-acid chain: Chloramphenicol efflux pump MT0201 (413 aa).

A run of 12 helical transmembrane segments spans residues 23 to 43 (LSVL…PVGA), 55 to 75 (VVLV…TTVP), 89 to 109 (LVVS…APNF), 110 to 130 (AVLA…WAVI), 150 to 170 (IYIG…AMSL), 176 to 196 (LAAV…RLAL), 226 to 246 (VLTM…VVII), 256 to 276 (NLAW…PLVA), 286 to 306 (AVIV…ALAF), 312 to 332 (AATA…ATAV), 353 to 373 (GLYV…GGLL), and 378 to 398 (LAMM…GMTV).

The protein belongs to the major facilitator superfamily.

The protein resides in the cell membrane. Active efflux pump that plays an important role in chloramphenicol resistance. This Mycobacterium tuberculosis (strain CDC 1551 / Oshkosh) protein is Chloramphenicol efflux pump MT0201.